Reading from the N-terminus, the 767-residue chain is Two-component response regulator-like PRR73 (767 aa).

The interval 1–64 (MGSACEAGTD…EPQQTDEQKE (64 aa)) is disordered. A Response regulatory domain is found at 82–200 (RVLLVENDDS…ELKNLWQHVW (119 aa)). Over residues 205–214 (SSSGSGSESG) the composition is skewed to low complexity. 5 disordered regions span residues 205 to 272 (SSSG…QSSW), 312 to 388 (RWLP…NEPT), 476 to 546 (ASNQ…RGKV), 646 to 701 (ANYS…SGSG), and 727 to 767 (NFGK…DEDR). Over residues 238–252 (DNEDDDDNDEDDDDL) the composition is skewed to acidic residues. Composition is skewed to polar residues over residues 263–272 (DNGSGTQSSW), 343–361 (RNSSMEYQSSPREMSVNPT), and 488–497 (CSPQDNSSEA). Low complexity predominate over residues 518-531 (GSNGSSNNNDMGSS). Over residues 532–543 (TKNAITKPSSNR) the composition is skewed to polar residues. Residues 689–700 (GAGGGNGSGSGS) are compositionally biased toward gly residues. Residues 712 to 754 (REAALNKFRQKRKVRNFGKKVRYQSRKRLAEQRPRIRGQFVRQ) form the CCT domain. Basic residues predominate over residues 727-738 (NFGKKVRYQSRK).

This sequence belongs to the ARR-like family.

The protein localises to the nucleus. Its function is as follows. Controls photoperiodic flowering response. Seems to be one of the component of the circadian clock. Expression of several members of the ARR-like family is controlled by circadian rhythm. The particular coordinated sequential expression of PRR73, PRR37, PRR95, PRR59 and PPR1 result to circadian waves that may be at the basis of the endogenous circadian clock. This Oryza sativa subsp. indica (Rice) protein is Two-component response regulator-like PRR73 (PRR73).